An 800-amino-acid polypeptide reads, in one-letter code: DNA mismatch repair protein MutS (800 aa).

616–623 (GPNMGGKS) is a binding site for ATP.

The protein belongs to the DNA mismatch repair MutS family.

In terms of biological role, this protein is involved in the repair of mismatches in DNA. It is possible that it carries out the mismatch recognition step. This protein has a weak ATPase activity. In Buchnera aphidicola subsp. Baizongia pistaciae (strain Bp), this protein is DNA mismatch repair protein MutS.